Reading from the N-terminus, the 397-residue chain is Transcription factor xenB (397 aa).

The interval 220 to 249 (TISDFETGDRQTISRSDTNSEVRPIPESPS) is disordered. Polar residues predominate over residues 229–240 (RQTISRSDTNSE).

Transcription factor; part of the gene cluster that mediates the biosynthesis of xenoacremones such as xenoacremone A, a compound that shows inhibitory activity toward the PI3K/AKT signaling pathway and which has the ability to induce apoptosis of A549 lung cancer cells. Acts as a positive regulator of the xenoacremones biosynthesis gene cluster. The sequence is that of Transcription factor xenB from Xenoacremonium sinensis (Endophyte fungus).